We begin with the raw amino-acid sequence, 116 residues long: Probable early E4 11 kDa protein (116 aa).

This Human adenovirus A serotype 12 (HAdV-12) protein is Probable early E4 11 kDa protein.